A 539-amino-acid chain; its full sequence is Probable glycerol kinase (539 aa).

A substrate-binding site is contributed by threonine 12. Arginine 16 serves as a coordination point for ATP. Residues arginine 86, tyrosine 168, and aspartate 285 each coordinate substrate. ATP-binding positions include threonine 307, glycine 352, and 453 to 457 (GMAKN).

The protein belongs to the FGGY kinase family.

It carries out the reaction glycerol + ATP = sn-glycerol 3-phosphate + ADP + H(+). Its pathway is polyol metabolism; glycerol degradation via glycerol kinase pathway; sn-glycerol 3-phosphate from glycerol: step 1/1. The protein is Probable glycerol kinase (gk) of Dictyostelium discoideum (Social amoeba).